The primary structure comprises 305 residues: UDP-3-O-acyl-N-acetylglucosamine deacetylase (305 aa).

Residues H79, H238, and D242 each coordinate Zn(2+). Residue H265 is the Proton donor of the active site.

It belongs to the LpxC family. Zn(2+) serves as cofactor.

It carries out the reaction a UDP-3-O-[(3R)-3-hydroxyacyl]-N-acetyl-alpha-D-glucosamine + H2O = a UDP-3-O-[(3R)-3-hydroxyacyl]-alpha-D-glucosamine + acetate. Its pathway is glycolipid biosynthesis; lipid IV(A) biosynthesis; lipid IV(A) from (3R)-3-hydroxytetradecanoyl-[acyl-carrier-protein] and UDP-N-acetyl-alpha-D-glucosamine: step 2/6. Its function is as follows. Catalyzes the hydrolysis of UDP-3-O-myristoyl-N-acetylglucosamine to form UDP-3-O-myristoylglucosamine and acetate, the committed step in lipid A biosynthesis. This is UDP-3-O-acyl-N-acetylglucosamine deacetylase from Haemophilus influenzae (strain PittEE).